A 409-amino-acid polypeptide reads, in one-letter code: Galactosylgalactosylxylosylprotein 3-beta-glucuronosyltransferase S (409 aa).

The interval 1-45 (MSSARLLESQTSDEDNEDIERRPHQSHSRSCSNNTTPTHPPHPMV) is disordered. Residues 1–53 (MSSARLLESQTSDEDNEDIERRPHQSHSRSCSNNTTPTHPPHPMVRKGGVARR) are Cytoplasmic-facing. The residue at position 9 (Ser-9) is a Phosphoserine. Thr-11 carries the post-translational modification Phosphothreonine. Phosphoserine occurs at positions 12 and 32. The helical; Signal-anchor for type II membrane protein transmembrane segment at 54-73 (ICLIGGALFLLLVALCYLTL) threads the bilayer. Residues 74–409 (SGDTRLGGSE…RENPHSKILS (336 aa)) are Lumenal-facing. Asn-102 and Asn-223 each carry an N-linked (GlcNAc...) asparagine glycan. Asp-235 provides a ligand contact to Mn(2+). The active-site Proton acceptor is Glu-318. A glycan (N-linked (GlcNAc...) asparagine) is linked at Asn-338. The interval 389–409 (EGRNALISKNGRENPHSKILS) is disordered. Basic and acidic residues predominate over residues 398-409 (NGRENPHSKILS).

It belongs to the glycosyltransferase 43 family. Mn(2+) is required as a cofactor.

The protein localises to the golgi apparatus membrane. It catalyses the reaction 3-O-(beta-D-galactosyl-(1-&gt;3)-beta-D-galactosyl-(1-&gt;4)-beta-D-xylosyl)-L-seryl-[protein] + UDP-alpha-D-glucuronate = 3-O-(beta-D-GlcA-(1-&gt;3)-beta-D-Gal-(1-&gt;3)-beta-D-Gal-(1-&gt;4)-beta-D-Xyl)-L-seryl-[protein] + UDP + H(+). It participates in protein modification; protein glycosylation. Functionally, involved in the biosynthesis of L2/HNK-1 carbohydrate epitope on both glycolipids and glycoproteins. Enzyme has a broad specificity. The polypeptide is Galactosylgalactosylxylosylprotein 3-beta-glucuronosyltransferase S (GlcAT-S) (Drosophila melanogaster (Fruit fly)).